A 253-amino-acid chain; its full sequence is Vacuolar v-SNARE NYV1 (253 aa).

The Cytoplasmic segment spans residues 1–231 (MKRFNVSYVE…EIMWWQKVKN (231 aa)). The disordered stretch occupies residues 147–166 (LNSSGNGQSSNGNGQNTISD). Positions 148-162 (NSSGNGQSSNGNGQN) are enriched in low complexity. In terms of domain architecture, v-SNARE coiled-coil homology spans 167 to 227 (IGDATEDQIK…VNIKEIMWWQ (61 aa)). The helical; Anchor for type IV membrane protein transmembrane segment at 232–252 (ITLLTFTIILFVSAAFMFFYL) threads the bilayer. Position 253 (tryptophan 253) is a topological domain, vacuolar.

It belongs to the synaptobrevin family. Present in a pentameric cis-SNARE complex composed of the v-SNAREs NYV1, VTI1 and YKT6, and the t-SNAREs VAM3 and VAM7 on vacuolar membranes. Interacts in trans with the cognate t-SNARE VAM3 during the docking step of homotypic vacuolar fusion. Interacts with the vacuolar transporter chaperone (VTC) complex and the vacuolar Ca(2+)-ATPase PMC1.

The protein resides in the vacuole membrane. In terms of biological role, vacuolar v-SNARE required for docking. Only involved in homotypic vacuole fusion. Required for Ca(2+) efflux from the vacuolar lumen, a required signal for subsequent membrane fusion events, by inhibiting vacuolar Ca(2+)-ATPase PMC1 and promoting Ca(2+) release when forming trans-SNARE assemblies during the docking step. This is Vacuolar v-SNARE NYV1 (NYV1) from Saccharomyces cerevisiae (strain ATCC 204508 / S288c) (Baker's yeast).